The chain runs to 130 residues: MIGNWNYGTGRRKSAVARVFIKAGKGDIVVNGKPIADYFSRETSLMIVRQPLELTNHGTTFDIKVNVSGGGETGQAGAVRHGITRALMDYDATLKPALSNAGFVTRDAREVERKKVGFHKARRRKQFSKR.

The protein belongs to the universal ribosomal protein uS9 family.

This is Small ribosomal subunit protein uS9 from Paraburkholderia phymatum (strain DSM 17167 / CIP 108236 / LMG 21445 / STM815) (Burkholderia phymatum).